The chain runs to 513 residues: GMP synthase [glutamine-hydrolyzing] (513 aa).

A Glutamine amidotransferase type-1 domain is found at 8–198 (MILVLDFGSQ…VFGVCDCEGK (191 aa)). The active-site Nucleophile is C85. Residues H172 and E174 contribute to the active site. The GMPS ATP-PPase domain maps to 199–388 (WSMENFIEIE…LGLPDDIVWR (190 aa)). 226–232 (SGGVDSS) lines the ATP pocket.

In terms of assembly, homodimer.

It catalyses the reaction XMP + L-glutamine + ATP + H2O = GMP + L-glutamate + AMP + diphosphate + 2 H(+). Its pathway is purine metabolism; GMP biosynthesis; GMP from XMP (L-Gln route): step 1/1. Its function is as follows. Catalyzes the synthesis of GMP from XMP. The protein is GMP synthase [glutamine-hydrolyzing] of Bacillus velezensis (strain DSM 23117 / BGSC 10A6 / LMG 26770 / FZB42) (Bacillus amyloliquefaciens subsp. plantarum).